Consider the following 290-residue polypeptide: Small ribosomal subunit protein uS2 (290 aa).

This sequence belongs to the universal ribosomal protein uS2 family. Component of the small ribosomal subunit. Mature ribosomes consist of a small (40S) and a large (60S) subunit. The 40S subunit contains about 33 different proteins and 1 molecule of RNA (18S). The 60S subunit contains about 49 different proteins and 3 molecules of RNA (28S, 5.8S and 5S). Interacts with ribosomal protein S21.

Its subcellular location is the cytoplasm. Required for the assembly and/or stability of the 40S ribosomal subunit. Required for the processing of the 20S rRNA-precursor to mature 18S rRNA in a late step of the maturation of 40S ribosomal subunits. This is Small ribosomal subunit protein uS2 from Culex quinquefasciatus (Southern house mosquito).